Here is a 346-residue protein sequence, read N- to C-terminus: Ribosomal RNA small subunit methyltransferase H (346 aa).

S-adenosyl-L-methionine is bound by residues 53 to 55, D70, F97, D114, and Q121; that span reads GGY.

Belongs to the methyltransferase superfamily. RsmH family.

The protein localises to the cytoplasm. It carries out the reaction cytidine(1402) in 16S rRNA + S-adenosyl-L-methionine = N(4)-methylcytidine(1402) in 16S rRNA + S-adenosyl-L-homocysteine + H(+). Specifically methylates the N4 position of cytidine in position 1402 (C1402) of 16S rRNA. In Bartonella henselae (strain ATCC 49882 / DSM 28221 / CCUG 30454 / Houston 1) (Rochalimaea henselae), this protein is Ribosomal RNA small subunit methyltransferase H.